The chain runs to 348 residues: Photosystem II protein D1 (348 aa).

3 helical membrane-spanning segments follow: residues 33–50, 122–137, and 146–160; these read YIGWFGILMFPLLVLATV, HFILGAGAYMGREWEF, and WIFVAFSAPLVAASA. Residue H122 participates in chlorophyll a binding. Y130 is a binding site for pheophytin a. Residues D174 and E193 each coordinate [CaMn4O5] cluster. Residues 201-222 form a helical membrane-spanning segment; it reads FHILGVAAVFGGSLFSAMHGSL. Position 202 (H202) interacts with chlorophyll a. Residues H219 and 268 to 269 contribute to the a quinone site; that span reads SF. H219 serves as a coordination point for Fe cation. H276 is a Fe cation binding site. Residues 278 to 292 form a helical membrane-spanning segment; sequence FLAAWPVIGIWFTAL. Residues H336, E337, D346, and A348 each contribute to the [CaMn4O5] cluster site.

This sequence belongs to the reaction center PufL/M/PsbA/D family. PSII is composed of 1 copy each of membrane proteins PsbA, PsbB, PsbC, PsbD, PsbE, PsbF, PsbH, PsbI, PsbJ, PsbK, PsbL, PsbM, PsbT, PsbX, PsbY, PsbZ, Psb30/Ycf12, at least 3 peripheral proteins of the oxygen-evolving complex and a large number of cofactors. It forms dimeric complexes. The D1/D2 heterodimer binds P680, chlorophylls that are the primary electron donor of PSII, and subsequent electron acceptors. It shares a non-heme iron and each subunit binds pheophytin, quinone, additional chlorophylls, carotenoids and lipids. D1 provides most of the ligands for the Mn4-Ca-O5 cluster of the oxygen-evolving complex (OEC). There is also a Cl(-1) ion associated with D1 and D2, which is required for oxygen evolution. The PSII complex binds additional chlorophylls, carotenoids and specific lipids. is required as a cofactor. Tyr-165 forms a radical intermediate that is referred to as redox-active TyrZ, YZ or Y-Z.

It is found in the plastid. Its subcellular location is the chloroplast thylakoid membrane. It carries out the reaction 2 a plastoquinone + 4 hnu + 2 H2O = 2 a plastoquinol + O2. Its function is as follows. Photosystem II (PSII) is a light-driven water:plastoquinone oxidoreductase that uses light energy to abstract electrons from H(2)O, generating O(2) and a proton gradient subsequently used for ATP formation. It consists of a core antenna complex that captures photons, and an electron transfer chain that converts photonic excitation into a charge separation. The D1/D2 (PsbA/PsbD) reaction center heterodimer binds P680, the primary electron donor of PSII as well as several subsequent electron acceptors. The sequence is that of Photosystem II protein D1 from Heterocapsa pygmaea (Dinoflagellate).